Reading from the N-terminus, the 412-residue chain is Class E basic helix-loop-helix protein 40 (412 aa).

Positions methionine 1–glutamate 21 are disordered. The segment at methionine 1–glutamine 139 is essential for interaction with BMAL1, E-box binding and repressor activity against the CLOCK-BMAL1 heterodimer. The bHLH domain occupies threonine 52–leucine 107. Residues leucine 75–leucine 79 form a necessary for interaction with RXRA and repressor activity against RXRA region. In terms of domain architecture, Orange spans phenylalanine 142–leucine 175. Residue lysine 159 forms a Glycyl lysine isopeptide (Lys-Gly) (interchain with G-Cter in SUMO1, SUMO2 and SUMO3) linkage. Lysine 167 participates in a covalent cross-link: Glycyl lysine isopeptide (Lys-Gly) (interchain with G-Cter in SUMO2). Disordered regions lie at residues leucine 182–valine 256 and lysine 279–glutamate 298. Serine 235 is modified (phosphoserine). Lysine 279 participates in a covalent cross-link: Glycyl lysine isopeptide (Lys-Gly) (interchain with G-Cter in SUMO1); alternate. Lysine 279 is covalently cross-linked (Glycyl lysine isopeptide (Lys-Gly) (interchain with G-Cter in SUMO1, SUMO2 and SUMO3); alternate). A Glycyl lysine isopeptide (Lys-Gly) (interchain with G-Cter in SUMO2); alternate cross-link involves residue lysine 279. A Glycyl lysine isopeptide (Lys-Gly) (interchain with G-Cter in SUMO2) cross-link involves residue lysine 288. Phosphoserine is present on serine 383.

Homodimer. Heterodimer with BHLHE41/DEC2. Interacts with TCF3/E47. Interacts with ubiquitin-conjugating enzyme UBE2I/UBC9. Interacts with HDAC1, SUMO1, RXRA and BMAL1. Ubiquitinated; which may lead to proteasomal degradation. In terms of processing, sumoylation inhibits its ubiquitination and promotes its negative regulation of the CLOCK-BMAL1 heterodimer transcriptional activator activity.

The protein resides in the cytoplasm. Its subcellular location is the nucleus. Its function is as follows. Transcriptional repressor involved in the regulation of the circadian rhythm by negatively regulating the activity of the clock genes and clock-controlled genes. Acts as the negative limb of a novel autoregulatory feedback loop (DEC loop) which differs from the one formed by the PER and CRY transcriptional repressors (PER/CRY loop). Both these loops are interlocked as it represses the expression of PER1/2 and in turn is repressed by PER1/2 and CRY1/2. Represses the activity of the circadian transcriptional activator: CLOCK-BMAL1|BMAL2 heterodimer by competing for the binding to E-box elements (5'-CACGTG-3') found within the promoters of its target genes. Negatively regulates its own expression and the expression of DBP and BHLHE41/DEC2. Acts as a corepressor of RXR and the RXR-LXR heterodimers and represses the ligand-induced RXRA and NR1H3/LXRA transactivation activity. May be involved in the regulation of chondrocyte differentiation via the cAMP pathway. Represses the transcription of NR0B2 and attentuates the transactivation of NR0B2 by the CLOCK-BMAL1 complex. Drives the circadian rhythm of blood pressure through transcriptional repression of ATP1B1 in the cardiovascular system. The polypeptide is Class E basic helix-loop-helix protein 40 (BHLHE40) (Bos taurus (Bovine)).